Here is a 361-residue protein sequence, read N- to C-terminus: Phosphoserine aminotransferase (361 aa).

Arginine 42 serves as a coordination point for L-glutamate. Residues 76–77, tryptophan 102, threonine 152, aspartate 172, and glutamine 195 each bind pyridoxal 5'-phosphate; that span reads AT. An N6-(pyridoxal phosphate)lysine modification is found at lysine 196. A pyridoxal 5'-phosphate-binding site is contributed by 237-238; it reads NT.

This sequence belongs to the class-V pyridoxal-phosphate-dependent aminotransferase family. SerC subfamily. As to quaternary structure, homodimer. Requires pyridoxal 5'-phosphate as cofactor.

It localises to the cytoplasm. It catalyses the reaction O-phospho-L-serine + 2-oxoglutarate = 3-phosphooxypyruvate + L-glutamate. The enzyme catalyses 4-(phosphooxy)-L-threonine + 2-oxoglutarate = (R)-3-hydroxy-2-oxo-4-phosphooxybutanoate + L-glutamate. Its pathway is amino-acid biosynthesis; L-serine biosynthesis; L-serine from 3-phospho-D-glycerate: step 2/3. It functions in the pathway cofactor biosynthesis; pyridoxine 5'-phosphate biosynthesis; pyridoxine 5'-phosphate from D-erythrose 4-phosphate: step 3/5. Its function is as follows. Catalyzes the reversible conversion of 3-phosphohydroxypyruvate to phosphoserine and of 3-hydroxy-2-oxo-4-phosphonooxybutanoate to phosphohydroxythreonine. The sequence is that of Phosphoserine aminotransferase from Stenotrophomonas maltophilia (strain K279a).